A 150-amino-acid chain; its full sequence is MNVILLEKVQNLGSLGEQVAVKSGFARNFLIPQGKAKPATKENIAEFEARRAELEKLAAEALASAQAVYEKMNGTVVTIESVAGDEGKLFGSIGTADIADALSKAGFDVERKNIRMPEGALRYVGTFEFDVELHSDVVASITVEVKATEE.

Belongs to the bacterial ribosomal protein bL9 family.

In terms of biological role, binds to the 23S rRNA. The sequence is that of Large ribosomal subunit protein bL9 from Hydrogenovibrio crunogenus (strain DSM 25203 / XCL-2) (Thiomicrospira crunogena).